A 385-amino-acid polypeptide reads, in one-letter code: Exopolygalacturonase rpg16 (385 aa).

The first 26 residues, 1-26 (MVRFTSFTSPFSAILLLSFGINKVAT), serve as a signal peptide directing secretion. N-linked (GlcNAc...) asparagine glycans are attached at residues asparagine 143, asparagine 161, asparagine 164, and asparagine 180. One copy of the PbH1 1 repeat lies at 165–195 (STNLLLHDFIIHTVSNNSNPAKNTDALDLYH). Aspartate 210 acts as the Proton donor in catalysis. Cysteine 212 and cysteine 229 form a disulfide bridge. 2 N-linked (GlcNAc...) asparagine glycosylation sites follow: asparagine 218 and asparagine 226. 3 PbH1 repeats span residues 219–241 (VTKV…GSLG), 249–270 (VTQV…RVKT), and 278–299 (VEDI…IITT). The active site involves histidine 233. 3 N-linked (GlcNAc...) asparagine glycosylation sites follow: asparagine 256, asparagine 282, and asparagine 343. An intrachain disulfide couples cysteine 344 to cysteine 350. A PbH1 5 repeat occupies 350-376 (CSDVTLTNINISKASNNTKNVCVNLKG). Residues asparagine 359 and asparagine 365 are each glycosylated (N-linked (GlcNAc...) asparagine).

The protein belongs to the glycosyl hydrolase 28 family. Post-translationally, N-glycosylated.

The protein resides in the secreted. It catalyses the reaction [(1-&gt;4)-alpha-D-galacturonosyl](n) + H2O = alpha-D-galacturonate + [(1-&gt;4)-alpha-D-galacturonosyl](n-1). Specific in hydrolyzing the terminal glycosidic bond of polygalacturonic acid and oligogalacturonates. In Rhizopus delemar (strain RA 99-880 / ATCC MYA-4621 / FGSC 9543 / NRRL 43880) (Mucormycosis agent), this protein is Exopolygalacturonase rpg16.